An 815-amino-acid chain; its full sequence is MVSRLRGFLAWVYRWITTTDHKDIGLLYLVTSIAFLLIAGSLALLFRVQLAIPKSNFLTGDAYYEAVTVHGLIMLLWFASPFAFGLANYIVPLQIGARDLAFPRLNALSYWLYLLSGLVLLASFFTESGAPNVGWTLYAPLTARIYTPGIGLDLAALAIFLFSLSVTLGTINFLVTIAAMRAPGIGWFKMPMFTWSILFTVILMLWAFPPLMVGGALLLLDRNLGTEFFLNPAGGALLWDHLFWFFGHPEVYILLFPALGAMADVISTFSGKPIYAKRYILTAFLIATIISFVVWMHHMFITGTNIYTRLFYSITTILISIPFEMAVMSFIFTLYKGRLVYTVPMLFAVGALLNFIIGGSTGVYLGSIAIDRGFRGTYWVVAHFHYILVGTVTLGLIAGLYYWWPKITGRTYSERLGKIHFALAMLGVALTFLPQFALMDMPRRYFTYDIPEWVPLNQLSTLGAFIFGGSMAIGLVNFLYSLVKGGSAAPNPWNSWTLEWFTNSPPPKHNFDGVPVVRKDNTVVFVSEEALSKYGKDAIVEGRVDVSNVPLSGGQSHSSHGLTHHGTTDPLVLAAGLTLALFGLFVSKPLSYLGAIVFLLSLARWLWKDVKNVFAEELPGYVEHWPFPKDKIRSAMWVFIASEVATFGSIFSAYFFIRFNPVGKFLTEAWPPGYLVHDVNVGLINTIILFTGTMLFTLAYLGVKRDNYLITLSGLLGTLFMAIYFLTVKYFEWKELLIAGLGLDAGMYMQAYYVTTGAHALHVILGVLATTYLLVKLFNGNLRGRQALSEVLAVGIYWGIVEIVWTLVFPLYYLV.

The segment at 1 to 467 (MVSRLRGFLA…QLSTLGAFIF (467 aa)) is COX1. Residues 26 to 46 (LLYLVTSIAFLLIAGSLALLF) form a helical membrane-spanning segment. His70 is a Fe(II)-heme a binding site. Helical transmembrane passes span 71–91 (GLIMLLWFASPFAFGLANYIV), 105–125 (LNALSYWLYLLSGLVLLASFF), 157–177 (LAIFLFSLSVTLGTINFLVTI), 197–217 (ILFTVILMLWAFPPLMVGGAL), 242–262 (LFWFFGHPEVYILLFPALGAM), 281–301 (LTAFLIATIISFVVWMHHMFI), 314–334 (ITTILISIPFEMAVMSFIFTL), 339–359 (LVYTVPMLFAVGALLNFIIGG), 380–400 (VVAHFHYILVGTVTLGLIAGL), 419–439 (IHFALAMLGVALTFLPQFALM), 463–483 (GAFIFGGSMAIGLVNFLYSLV), 580–600 (ALFGLFVSKPLSYLGAIVFLL), 637–657 (WVFIASEVATFGSIFSAYFFI), 683–703 (LINTIILFTGTMLFTLAYLGV), 708–728 (YLITLSGLLGTLFMAIYFLTV), 736–756 (LLIAGLGLDAGMYMQAYYVTT), 758–778 (AHALHVILGVLATTYLLVKLF), and 791–811 (VLAVGIYWGIVEIVWTLVFPL). 4 residues coordinate Cu cation: His248, Tyr252, His297, and His298. The segment at residues 248 to 252 (HPEVY) is a cross-link (1'-histidyl-3'-tyrosine (His-Tyr)). His383 lines the heme a3 pocket. His385 contributes to the Fe(II)-heme a binding site. The interval 545-815 (DVSNVPLSGG…TLVFPLYYLV (271 aa)) is COX3.

This sequence in the N-terminal section; belongs to the heme-copper respiratory oxidase family. It in the C-terminal section; belongs to the cytochrome c oxidase subunit 3 family. The cofactor is heme. Cu cation is required as a cofactor.

Its subcellular location is the cell membrane. The chain is Heme-copper oxidase subunit I+III (aoxB) from Aeropyrum pernix (strain ATCC 700893 / DSM 11879 / JCM 9820 / NBRC 100138 / K1).